A 106-amino-acid polypeptide reads, in one-letter code: Ig kappa-b4 chain C region (106 aa).

The region spanning 6–99 (PSVLLFPPSK…VQGSASPIVQ (94 aa)) is the Ig-like domain. C27 and C87 are disulfide-bonded. A compositionally biased stretch (polar residues) spans 48–64 (QQSGIENSKTPQSPEDN). Residues 48–67 (QQSGIENSKTPQSPEDNTYS) are disordered.

In Oryctolagus cuniculus (Rabbit), this protein is Ig kappa-b4 chain C region (K-BAS).